Reading from the N-terminus, the 55-residue chain is Large ribosomal subunit protein bL33 (55 aa).

This sequence belongs to the bacterial ribosomal protein bL33 family.

This Bartonella quintana (strain Toulouse) (Rochalimaea quintana) protein is Large ribosomal subunit protein bL33.